We begin with the raw amino-acid sequence, 224 residues long: UPF0758 protein VSAL_I0192 (224 aa).

The MPN domain occupies 102-224 (ALTSPEHTKR…IVSFAERGWI (123 aa)). The Zn(2+) site is built by H173, H175, and D186. A JAMM motif motif is present at residues 173-186 (HNHPSGVAEPSQAD).

This sequence belongs to the UPF0758 family.

The polypeptide is UPF0758 protein VSAL_I0192 (Aliivibrio salmonicida (strain LFI1238) (Vibrio salmonicida (strain LFI1238))).